Consider the following 1015-residue polypeptide: DNA polymerase catalytic subunit (1015 aa).

Belongs to the DNA polymerase type-B family. In terms of assembly, forms a complex with the major DNA-binding protein BALF2, the DNA polymerase processivity factor BMRF1, and the alkaline exonuclease BGLF5. Interacts with the putative helicase-primase complex composed of BBLF4, BSLF1 and BBLF2/3 proteins; these interactions may coordinate leading and lagging strand DNA synthesis at the replication fork.

Its subcellular location is the host nucleus. It carries out the reaction DNA(n) + a 2'-deoxyribonucleoside 5'-triphosphate = DNA(n+1) + diphosphate. Functionally, replicates viral genomic DNA in the late phase of lytic infection, producing long concatemeric DNA. The replication complex is composed of six viral proteins: the DNA polymerase, processivity factor, primase, primase-associated factor, helicase, and ssDNA-binding protein. The polypeptide is DNA polymerase catalytic subunit (Homo sapiens (Human)).